The chain runs to 471 residues: Putative multidrug resistance protein MdtD (471 aa).

Residues 1 to 11 lie on the Periplasmic side of the membrane; it reads MTDLPDSTRWQ. Residues 12–32 form a helical membrane-spanning segment; that stretch reads LWIVAFGFFMQSLDTTIVNTA. The Cytoplasmic segment spans residues 33–48; that stretch reads LPSMAQSLGESPLHMH. The chain crosses the membrane as a helical span at residues 49–69; the sequence is MVIVSYVLTVAVMLPASGWLA. The Periplasmic segment spans residues 70 to 76; sequence DKVGVRN. A helical membrane pass occupies residues 77–97; that stretch reads IFFTAIVLFTLGSLFCALSGT. Over 98–101 the chain is Cytoplasmic; it reads LNEL. A helical transmembrane segment spans residues 102 to 124; sequence LLARALQGVGGAMMVPVGRLTVM. Residues 125-137 are Periplasmic-facing; that stretch reads KIVPREQYMAAMT. Residues 138–158 form a helical membrane-spanning segment; it reads FVTLPGQVGPLLGPALGGLLV. Over 159–164 the chain is Cytoplasmic; the sequence is EYASWH. Residues 165-185 form a helical membrane-spanning segment; that stretch reads WIFLINIPVGIIGAIATLMLM. At 186–196 the chain is on the periplasmic side; that stretch reads PNYTMQTRRFD. Residues 197 to 217 form a helical membrane-spanning segment; the sequence is LSGFLLLAVGMAVLTLALDGS. The Cytoplasmic segment spans residues 218–224; sequence KGTGLSP. Residues 225-245 form a helical membrane-spanning segment; sequence LAIAGLVAVGVVALVLYLLHA. Residues 246–262 lie on the Periplasmic side of the membrane; the sequence is RNNNRALFSLKLFRTRT. The chain crosses the membrane as a helical span at residues 263-283; sequence FSLGLAGSFAGRIGSGMLPFM. The Cytoplasmic portion of the chain corresponds to 284 to 285; sequence TP. The chain crosses the membrane as a helical span at residues 286–306; it reads VFLQIGLGFSPFHAGLMMIPM. Residues 307–341 are Periplasmic-facing; that stretch reads VLGSMGMKRIVVQVVNRFGYRRVLVATTLGLSLVT. A helical transmembrane segment spans residues 342 to 362; sequence MLFMTTALLGWYYVLPFVLFL. At 363 to 395 the chain is on the cytoplasmic side; it reads QGMVNSTRFSSMNTLTLKDLPDNLASSGNSLLS. The helical transmembrane segment at 396–416 threads the bilayer; sequence MIMQLSMSIGVTIAGLLLGLF. The Periplasmic portion of the chain corresponds to 417 to 430; it reads GSQHVSVDSGTTQT. A helical transmembrane segment spans residues 431-451; the sequence is VFMYTWLSMAFIIALPAFIFA. Residues 452-471 are Cytoplasmic-facing; sequence RVPNDTHQNVAISRRKRSAQ.

This sequence belongs to the major facilitator superfamily. TCR/Tet family.

Its subcellular location is the cell inner membrane. The sequence is that of Putative multidrug resistance protein MdtD from Escherichia coli O7:K1 (strain IAI39 / ExPEC).